The sequence spans 226 residues: uncharacterized protein (226 aa).

The N-acetyltransferase domain occupies 75 to 226 (YTIRNVTKDD…KGWLRMVKRI (152 aa)).

Belongs to the acetyltransferase family.

This is an uncharacterized protein from Methanocaldococcus jannaschii (strain ATCC 43067 / DSM 2661 / JAL-1 / JCM 10045 / NBRC 100440) (Methanococcus jannaschii).